The sequence spans 68 residues: Large ribosomal subunit protein uL29 (68 aa).

This sequence belongs to the universal ribosomal protein uL29 family.

In Roseobacter denitrificans (strain ATCC 33942 / OCh 114) (Erythrobacter sp. (strain OCh 114)), this protein is Large ribosomal subunit protein uL29.